Consider the following 122-residue polypeptide: MARIAGVDLPREKRVEIALTYIYGIGLSTSQKILSTTGISPDARVKDLSEDEVNEIRTYINKNLMVEGDLRRDVALNIKRLVEIGSYRGIRHRRGLPVRGQKTKTNARTRKGPKKTMANKKK.

The segment at 93 to 122 (RRGLPVRGQKTKTNARTRKGPKKTMANKKK) is disordered.

Belongs to the universal ribosomal protein uS13 family. As to quaternary structure, part of the 30S ribosomal subunit. Forms a loose heterodimer with protein S19. Forms two bridges to the 50S subunit in the 70S ribosome.

In terms of biological role, located at the top of the head of the 30S subunit, it contacts several helices of the 16S rRNA. In the 70S ribosome it contacts the 23S rRNA (bridge B1a) and protein L5 of the 50S subunit (bridge B1b), connecting the 2 subunits; these bridges are implicated in subunit movement. Contacts the tRNAs in the A and P-sites. The protein is Small ribosomal subunit protein uS13 of Clostridium botulinum (strain Alaska E43 / Type E3).